The chain runs to 1024 residues: DNA-directed RNA polymerase subunit beta (1024 aa).

Belongs to the RNA polymerase beta chain family. In terms of assembly, in plastids the minimal PEP RNA polymerase catalytic core is composed of four subunits: alpha, beta, beta', and beta''. When a (nuclear-encoded) sigma factor is associated with the core the holoenzyme is formed, which can initiate transcription (Potential).

The protein localises to the plastid. It is found in the apicoplast. It catalyses the reaction RNA(n) + a ribonucleoside 5'-triphosphate = RNA(n+1) + diphosphate. In terms of biological role, DNA-dependent RNA polymerase catalyzes the transcription of DNA into RNA using the four ribonucleoside triphosphates as substrates. The polypeptide is DNA-directed RNA polymerase subunit beta (rpoB) (Plasmodium falciparum (isolate 3D7)).